Reading from the N-terminus, the 167-residue chain is NAD(P)H-quinone oxidoreductase subunit I, chloroplastic (167 aa).

2 4Fe-4S ferredoxin-type domains span residues 55–84 and 95–124; these read GRIH…VDWK and LNYS…MTEE. Cysteine 64, cysteine 67, cysteine 70, cysteine 74, cysteine 104, cysteine 107, cysteine 110, and cysteine 114 together coordinate [4Fe-4S] cluster.

This sequence belongs to the complex I 23 kDa subunit family. In terms of assembly, NDH is composed of at least 16 different subunits, 5 of which are encoded in the nucleus. Requires [4Fe-4S] cluster as cofactor.

Its subcellular location is the plastid. The protein localises to the chloroplast thylakoid membrane. It carries out the reaction a plastoquinone + NADH + (n+1) H(+)(in) = a plastoquinol + NAD(+) + n H(+)(out). The catalysed reaction is a plastoquinone + NADPH + (n+1) H(+)(in) = a plastoquinol + NADP(+) + n H(+)(out). NDH shuttles electrons from NAD(P)H:plastoquinone, via FMN and iron-sulfur (Fe-S) centers, to quinones in the photosynthetic chain and possibly in a chloroplast respiratory chain. The immediate electron acceptor for the enzyme in this species is believed to be plastoquinone. Couples the redox reaction to proton translocation, and thus conserves the redox energy in a proton gradient. The sequence is that of NAD(P)H-quinone oxidoreductase subunit I, chloroplastic from Gossypium barbadense (Sea Island cotton).